The chain runs to 296 residues: Elongation factor Ts (296 aa).

Positions 79–82 (TDFV) are involved in Mg(2+) ion dislocation from EF-Tu.

Belongs to the EF-Ts family.

It is found in the cytoplasm. Its function is as follows. Associates with the EF-Tu.GDP complex and induces the exchange of GDP to GTP. It remains bound to the aminoacyl-tRNA.EF-Tu.GTP complex up to the GTP hydrolysis stage on the ribosome. The chain is Elongation factor Ts from Acholeplasma laidlawii (strain PG-8A).